The primary structure comprises 213 residues: UPF0111 protein TM_0914 (213 aa).

This sequence belongs to the UPF0111 family.

The polypeptide is UPF0111 protein TM_0914 (Thermotoga maritima (strain ATCC 43589 / DSM 3109 / JCM 10099 / NBRC 100826 / MSB8)).